The primary structure comprises 212 residues: Small ribosomal subunit protein uS2 (212 aa).

The segment at 190–212 (LSPDAPEDQPAPVSEFETKVKMV) is disordered.

It belongs to the universal ribosomal protein uS2 family.

This Ignicoccus hospitalis (strain KIN4/I / DSM 18386 / JCM 14125) protein is Small ribosomal subunit protein uS2.